The sequence spans 76 residues: Probable small nuclear ribonucleoprotein G (76 aa).

A Sm domain is found at 4 to 76; it reads AHPPEVKKYM…IVMVEALDRV (73 aa).

This sequence belongs to the snRNP Sm proteins family. In terms of assembly, interacts with the SMN complex. Core component of the spliceosomal U1, U2, U4 and U5 small nuclear ribonucleoproteins (snRNPs), the building blocks of the spliceosome. Most spliceosomal snRNPs contain a common set of Sm proteins, SNRPB, SNRPD1, SNRPD2, SNRPD3, SNRPE, SNRPF and SNRPG that assemble in a heptameric protein ring on the Sm site of the small nuclear RNA to form the core snRNP. Component of the U1 snRNP. Component of the U4/U6-U5 tri-snRNP complex. Component of the U7 snRNP complex. Component of the U11/U12 snRNPs that are part of the U12-type spliceosome.

The protein localises to the cytoplasm. Its subcellular location is the cytosol. It localises to the nucleus. Plays a role in pre-mRNA splicing as a core component of the spliceosomal U1, U2, U4 and U5 small nuclear ribonucleoproteins (snRNPs), the building blocks of the spliceosome. Component of both the pre-catalytic spliceosome B complex and activated spliceosome C complexes. Is also a component of the minor U12 spliceosome. The chain is Probable small nuclear ribonucleoprotein G from Drosophila melanogaster (Fruit fly).